Consider the following 81-residue polypeptide: Putative defensin-like protein 31 (81 aa).

An N-terminal signal peptide occupies residues methionine 1–alanine 26. 3 disulfides stabilise this stretch: cysteine 38–cysteine 58, cysteine 44–cysteine 70, and cysteine 48–cysteine 72.

This sequence belongs to the DEFL family.

It is found in the secreted. In Arabidopsis thaliana (Mouse-ear cress), this protein is Putative defensin-like protein 31.